The sequence spans 157 residues: SsrA-binding protein (157 aa).

This sequence belongs to the SmpB family.

Its subcellular location is the cytoplasm. Functionally, required for rescue of stalled ribosomes mediated by trans-translation. Binds to transfer-messenger RNA (tmRNA), required for stable association of tmRNA with ribosomes. tmRNA and SmpB together mimic tRNA shape, replacing the anticodon stem-loop with SmpB. tmRNA is encoded by the ssrA gene; the 2 termini fold to resemble tRNA(Ala) and it encodes a 'tag peptide', a short internal open reading frame. During trans-translation Ala-aminoacylated tmRNA acts like a tRNA, entering the A-site of stalled ribosomes, displacing the stalled mRNA. The ribosome then switches to translate the ORF on the tmRNA; the nascent peptide is terminated with the 'tag peptide' encoded by the tmRNA and targeted for degradation. The ribosome is freed to recommence translation, which seems to be the essential function of trans-translation. In Lacticaseibacillus paracasei (strain ATCC 334 / BCRC 17002 / CCUG 31169 / CIP 107868 / KCTC 3260 / NRRL B-441) (Lactobacillus paracasei), this protein is SsrA-binding protein.